The following is a 160-amino-acid chain: Transcription antitermination protein NusB (160 aa).

The protein belongs to the NusB family.

Functionally, involved in transcription antitermination. Required for transcription of ribosomal RNA (rRNA) genes. Binds specifically to the boxA antiterminator sequence of the ribosomal RNA (rrn) operons. The protein is Transcription antitermination protein NusB of Allorhizobium ampelinum (strain ATCC BAA-846 / DSM 112012 / S4) (Agrobacterium vitis (strain S4)).